We begin with the raw amino-acid sequence, 403 residues long: Argininosuccinate synthase (403 aa).

ATP is bound by residues 13–21 (AYSGGLDTS) and Ala40. The L-citrulline site is built by Tyr92 and Ser97. Residue Gly122 participates in ATP binding. The L-aspartate site is built by Thr124, Asn128, and Asp129. Asn128 lines the L-citrulline pocket. L-citrulline is bound by residues Arg132, Ser181, Ser190, Glu266, and Tyr278.

Belongs to the argininosuccinate synthase family. Type 1 subfamily. In terms of assembly, homotetramer.

It localises to the cytoplasm. The catalysed reaction is L-citrulline + L-aspartate + ATP = 2-(N(omega)-L-arginino)succinate + AMP + diphosphate + H(+). It participates in amino-acid biosynthesis; L-arginine biosynthesis; L-arginine from L-ornithine and carbamoyl phosphate: step 2/3. The sequence is that of Argininosuccinate synthase from Aliivibrio salmonicida (strain LFI1238) (Vibrio salmonicida (strain LFI1238)).